Reading from the N-terminus, the 260-residue chain is Putative ABC transporter substrate-binding lipoprotein YvgL (260 aa).

The first 20 residues, 1–20 (MFKKYSIFIAALTAFLLVAG), serve as a signal peptide directing secretion. Cys-21 is lipidated: N-palmitoyl cysteine. Cys-21 carries S-diacylglycerol cysteine lipidation. Residues Ser-43, Ser-71, Ala-151, Val-178, and Tyr-196 each coordinate molybdate.

This sequence belongs to the bacterial solute-binding protein ModA family.

Its subcellular location is the cell membrane. This is Putative ABC transporter substrate-binding lipoprotein YvgL (yvgL) from Bacillus subtilis (strain 168).